Reading from the N-terminus, the 159-residue chain is Small ribosomal subunit protein uS7c (159 aa).

Residues 137-159 are disordered; sequence HAIRKKEETHKMAESNRAXAHYR. The span at 141-150 shows a compositional bias: basic and acidic residues; sequence KKEETHKMAE.

The protein belongs to the universal ribosomal protein uS7 family. In terms of assembly, part of the 30S ribosomal subunit.

It is found in the plastid. It localises to the chloroplast. Its function is as follows. One of the primary rRNA binding proteins, it binds directly to 16S rRNA where it nucleates assembly of the head domain of the 30S subunit. The chain is Small ribosomal subunit protein uS7c (rps7) from Sciadopitys verticillata (Japanese umbrella-pine).